Consider the following 77-residue polypeptide: MSDVADRVKKIVVEHLGVEEDKVTESASFIDDLGADSLDTVELVMAFEEEFGIEIPDDAAETIQTFGDAVKFISEAS.

Residues serine 2 to serine 77 form the Carrier domain. Serine 37 is subject to O-(pantetheine 4'-phosphoryl)serine.

Belongs to the acyl carrier protein (ACP) family. In terms of processing, 4'-phosphopantetheine is transferred from CoA to a specific serine of apo-ACP by AcpS. This modification is essential for activity because fatty acids are bound in thioester linkage to the sulfhydryl of the prosthetic group.

It localises to the cytoplasm. It functions in the pathway lipid metabolism; fatty acid biosynthesis. Its function is as follows. Carrier of the growing fatty acid chain in fatty acid biosynthesis. This Ruegeria sp. (strain TM1040) (Silicibacter sp.) protein is Acyl carrier protein.